The sequence spans 350 residues: ADP-ribose pyrophosphatase, mitochondrial (350 aa).

The N-terminal 46 residues, Met1–Leu46, are a transit peptide targeting the mitochondrion. 2 disordered regions span residues Gly53 to Arg77 and Ser116 to Arg153. Ser121 carries the phosphoserine modification. The span at Phe124–Ser135 shows a compositional bias: basic and acidic residues. In terms of domain architecture, Nudix hydrolase spans Trp178–Lys334. Positions Gly215 to Asn237 match the Nudix box motif.

This sequence belongs to the Nudix hydrolase family. NudF subfamily. Monomer. Interacts with GLOD4. Mg(2+) serves as cofactor. Requires Mn(2+) as cofactor.

It is found in the mitochondrion. It carries out the reaction ADP-D-ribose + H2O = D-ribose 5-phosphate + AMP + 2 H(+). Functionally, hydrolyzes ADP-ribose (ADPR) to AMP and ribose 5'-phosphate. The polypeptide is ADP-ribose pyrophosphatase, mitochondrial (Nudt9) (Rattus norvegicus (Rat)).